Here is a 219-residue protein sequence, read N- to C-terminus: ER lumen protein-retaining receptor (219 aa).

At Met1 to Arg5 the chain is on the lumenal side. The helical transmembrane segment at Ile6–Thr26 threads the bilayer. The Cytoplasmic segment spans residues Arg27–Gln37. A run of 2 helical transmembrane segments spans residues Thr38–Ser58 and Leu59–Leu79. The Cytoplasmic portion of the chain corresponds to Gln80–Thr98. The helical transmembrane segment at Phe99–His116 threads the bilayer. Topologically, residues His117–Lys118 are lumenal. A helical membrane pass occupies residues Phe119–Pro139. Topologically, residues Gln140–Ser152 are cytoplasmic. A helical membrane pass occupies residues Leu153 to Ile173. The Lumenal portion of the chain corresponds to Trp174–Lys185. The chain crosses the membrane as a helical span at residues Ile186–Tyr206. Topologically, residues Thr207 to Lys219 are cytoplasmic.

This sequence belongs to the ERD2 family.

Its subcellular location is the endoplasmic reticulum membrane. Functionally, required for the retention of luminal endoplasmic reticulum proteins. Determines the specificity of the luminal ER protein retention system. Also required for normal vesicular traffic through the Golgi. This receptor strongly recognizes H-D-E-L and weakly recognizes D-D-E-L and K-D-E-L. The polypeptide is ER lumen protein-retaining receptor (Saccharomyces cerevisiae (strain ATCC 204508 / S288c) (Baker's yeast)).